The chain runs to 498 residues: Elastase (498 aa).

Positions 1–23 (MKKVSTLDLLFVAIMGVSPAAFA) are cleaved as a signal peptide. Residues 24-197 (ADLIDVSKLP…VLDQWEGLAH (174 aa)) constitute a propeptide that is removed on maturation. C227 and C255 are joined by a disulfide. T236 is modified (phosphothreonine). D333 is a binding site for Ca(2+). H337 contributes to the Zn(2+) binding site. The active site involves E338. Positions 341 and 361 each coordinate Zn(2+). 4 residues coordinate Ca(2+): E369, E372, D380, and L382. The active-site Proton donor is H420. C467 and C494 form a disulfide bridge.

The protein belongs to the peptidase M4 family. Ca(2+) serves as cofactor. Zn(2+) is required as a cofactor. Post-translationally, made as a pre-pro-protein which is exported to the periplasm. Probably autocatalyzes cleavage of its pro-peptide. The pro-peptide can be secreted with mature elastase.

Its subcellular location is the secreted. The catalysed reaction is Hydrolysis of proteins including elastin, collagen types III and IV, fibronectin and immunoglobulin A, generally with bulky hydrophobic group at P1'. Insulin B chain cleavage pattern identical to that of thermolysin, but specificity differs in other respects.. Cleaves host elastase, collagen, IgI and several complement components as well as endogenous pro-aminopeptidase, pro-chitin-binding protein (cbpD). Cleaves its own pro-peptide. Involved in the pathogenesis of P.aeruginosa infections. The sequence is that of Elastase (lasB) from Pseudomonas aeruginosa (strain UCBPP-PA14).